A 601-amino-acid polypeptide reads, in one-letter code: MSRQSTVSFRSGGGRSFSTASAITPSVSRTSFTSVSRSGGGGGGGFGRVSLGGAYGAGGFGSRSLYNLGGSKRISISASGGGFRNRFGAGAGGGYGFGGGAGSGFGFGGGAGGGGFGLGGGAGFGGGFGGPGFPVCPPGGIQEVTVNQSLLTPLNLQIDPTIQRVRTEEREQIKTLNNKFASFIDKVRFLEQQNKVLDTKWALLQEQGTKTVRQNLEPLLEQYINNLRRQLDGIVGERGRLDSELRNMQDLVEDFKNKYEDEINKRTTAENEFVMLKKDVDAAYMNKVELEAKVDALMDEINFMKMFFDAELSQMQTHVSDTSVVLSMDNNRSLDLDSIIAEVKAQYEDIANRSRTEAESWYQTKYEELQQTAGRHGDDLRNTKHEISEMNRMIQRLRSEIDNVKKQCANLQNAIADAEQRGELALKDARSKLAELEDALQKAKQDMARLLREYQELMNTKLALDVEIATYRKLLEGEECRLSGEGVGPVNISVVTNTVSSGYGGGSGFGGGLGGGLGGGLGGGLGGGLGGGLGSGLGGGGSSSFYSSSSGGVGLGGGLSVGGSGFSASSGRSLGFGSGGGSSSSVKFVSTTSSSRKSFKS.

The interval 1–168 (MSRQSTVSFR…DPTIQRVRTE (168 aa)) is head. 4 positions are modified to phosphoserine: S5, S8, S16, and S21. Residue T24 is modified to Phosphothreonine; by CDK1. A phosphoserine mark is found at S26, S36, S50, S64, S71, and S75. Residue T152 is modified to Phosphothreonine; by CDK1. Phosphothreonine; by AURKB is present on T167. Positions 169–204 (EREQIKTLNNKFASFIDKVRFLEQQNKVLDTKWALL) are coil 1A. The IF rod domain maps to 169-482 (EREQIKTLNN…KLLEGEECRL (314 aa)). The tract at residues 205-223 (QEQGTKTVRQNLEPLLEQY) is linker 1. Positions 224-316 (INNLRRQLDG…FFDAELSQMQ (93 aa)) are coil 1B. Residues 317 to 339 (THVSDTSVVLSMDNNRSLDLDSI) form a linker 12 region. The interval 340-478 (IAEVKAQYED…ATYRKLLEGE (139 aa)) is coil 2. Positions 479–601 (ECRLSGEGVG…TSSSRKSFKS (123 aa)) are tail. The tract at residues 576 to 601 (FGSGGGSSSSVKFVSTTSSSRKSFKS) is disordered. Over residues 583–601 (SSSVKFVSTTSSSRKSFKS) the composition is skewed to low complexity.

This sequence belongs to the intermediate filament family. As to quaternary structure, heterodimer of a type I and a type II keratin. Heterodimer with type I keratin KRT25 leading to the formation of keratin intermediate filament (KIF) network. Forms a heterodimer (via 2B domains) with KRT14 (via 2B domains). Interacts with TCHP. Interacts with EPPK1. Interacts with AMELX. Interacts with PKP1 (via N-terminus) and PKP2. In terms of processing, phosphorylated by CDK1, AURKB and Rho-kinase, phosphorylation is regulated by the cell cycle. Thr-24 phosphorylation, mediated by CDK1, peaks during prometaphase or metaphase cells with phosphorylated filamentous structures evident throughout the cytoplasm early mitosis. CDK1 phosphorylates Thr-24 in mitotic cells at the site of injury. Post-translationally, O-glycosylated.

It localises to the cytoplasm. Functionally, required for the formation of keratin intermediate filaments in the basal epidermis and maintenance of the skin barrier in response to mechanical stress. Regulates the recruitment of Langerhans cells to the epidermis, potentially by modulation of the abundance of macrophage chemotactic cytokines, macrophage inflammatory cytokines and CTNND1 localization in keratinocytes. This chain is Keratin, type II cytoskeletal 5, found in Bos taurus (Bovine).